A 980-amino-acid polypeptide reads, in one-letter code: Exportin-T (980 aa).

This sequence belongs to the exportin family. Expressed in roots, stems, leaves, flowers and embryos.

It localises to the nucleus. Its subcellular location is the cytoplasm. Its function is as follows. Probable tRNA nucleus export receptor which regulates tRNA processing and facilitates tRNA translocation across the nuclear pore complex. Is required for correct leaf initiation at different developmental stages and may play a role in floral patterning. This chain is Exportin-T, found in Oryza sativa subsp. japonica (Rice).